The sequence spans 191 residues: Crossover junction endodeoxyribonuclease RuvC (191 aa).

Catalysis depends on residues Asp-7, Glu-67, and Asp-141. Residues Asp-7, Glu-67, and Asp-141 each contribute to the Mg(2+) site.

The protein belongs to the RuvC family. In terms of assembly, homodimer which binds Holliday junction (HJ) DNA. The HJ becomes 2-fold symmetrical on binding to RuvC with unstacked arms; it has a different conformation from HJ DNA in complex with RuvA. In the full resolvosome a probable DNA-RuvA(4)-RuvB(12)-RuvC(2) complex forms which resolves the HJ. Mg(2+) is required as a cofactor.

It localises to the cytoplasm. The catalysed reaction is Endonucleolytic cleavage at a junction such as a reciprocal single-stranded crossover between two homologous DNA duplexes (Holliday junction).. Its function is as follows. The RuvA-RuvB-RuvC complex processes Holliday junction (HJ) DNA during genetic recombination and DNA repair. Endonuclease that resolves HJ intermediates. Cleaves cruciform DNA by making single-stranded nicks across the HJ at symmetrical positions within the homologous arms, yielding a 5'-phosphate and a 3'-hydroxyl group; requires a central core of homology in the junction. The consensus cleavage sequence is 5'-(A/T)TT(C/G)-3'. Cleavage occurs on the 3'-side of the TT dinucleotide at the point of strand exchange. HJ branch migration catalyzed by RuvA-RuvB allows RuvC to scan DNA until it finds its consensus sequence, where it cleaves and resolves the cruciform DNA. This Myxococcus xanthus (strain DK1622) protein is Crossover junction endodeoxyribonuclease RuvC.